A 368-amino-acid polypeptide reads, in one-letter code: Peptide chain release factor 2 (368 aa).

Glutamine 250 bears the N5-methylglutamine mark.

The protein belongs to the prokaryotic/mitochondrial release factor family. In terms of processing, methylated by PrmC. Methylation increases the termination efficiency of RF2.

It localises to the cytoplasm. In terms of biological role, peptide chain release factor 2 directs the termination of translation in response to the peptide chain termination codons UGA and UAA. The protein is Peptide chain release factor 2 of Rickettsia felis (strain ATCC VR-1525 / URRWXCal2) (Rickettsia azadi).